Here is a 368-residue protein sequence, read N- to C-terminus: Transaldolase (368 aa).

Lys140 functions as the Schiff-base intermediate with substrate in the catalytic mechanism.

The protein belongs to the transaldolase family. Type 2 subfamily.

It localises to the cytoplasm. It carries out the reaction D-sedoheptulose 7-phosphate + D-glyceraldehyde 3-phosphate = D-erythrose 4-phosphate + beta-D-fructose 6-phosphate. It functions in the pathway carbohydrate degradation; pentose phosphate pathway; D-glyceraldehyde 3-phosphate and beta-D-fructose 6-phosphate from D-ribose 5-phosphate and D-xylulose 5-phosphate (non-oxidative stage): step 2/3. In terms of biological role, transaldolase is important for the balance of metabolites in the pentose-phosphate pathway. The chain is Transaldolase from Thermobifida fusca (strain YX).